A 233-amino-acid chain; its full sequence is 2-C-methyl-D-erythritol 4-phosphate cytidylyltransferase (233 aa).

This sequence belongs to the IspD/TarI cytidylyltransferase family. IspD subfamily.

It catalyses the reaction 2-C-methyl-D-erythritol 4-phosphate + CTP + H(+) = 4-CDP-2-C-methyl-D-erythritol + diphosphate. The protein operates within isoprenoid biosynthesis; isopentenyl diphosphate biosynthesis via DXP pathway; isopentenyl diphosphate from 1-deoxy-D-xylulose 5-phosphate: step 2/6. Its function is as follows. Catalyzes the formation of 4-diphosphocytidyl-2-C-methyl-D-erythritol from CTP and 2-C-methyl-D-erythritol 4-phosphate (MEP). The sequence is that of 2-C-methyl-D-erythritol 4-phosphate cytidylyltransferase from Aromatoleum aromaticum (strain DSM 19018 / LMG 30748 / EbN1) (Azoarcus sp. (strain EbN1)).